The following is a 55-amino-acid chain: Large ribosomal subunit protein bL33 (55 aa).

Belongs to the bacterial ribosomal protein bL33 family.

The protein is Large ribosomal subunit protein bL33 of Novosphingobium aromaticivorans (strain ATCC 700278 / DSM 12444 / CCUG 56034 / CIP 105152 / NBRC 16084 / F199).